The following is a 454-amino-acid chain: tRNA modification GTPase MnmE (454 aa).

The (6S)-5-formyl-5,6,7,8-tetrahydrofolate site is built by Arg23, Glu80, and Lys120. One can recognise a TrmE-type G domain in the interval 216-377; sequence GMKVVIAGRP…LRNHLKQSMG (162 aa). Asn226 contributes to the K(+) binding site. GTP-binding positions include 226-231, 245-251, 270-273, 335-338, and 358-360; these read NAGKSS, TDIAGTT, DTAG, NKAD, and SAR. Residue Ser230 coordinates Mg(2+). K(+) is bound by residues Thr245, Ile247, and Thr250. Thr251 is a binding site for Mg(2+). Lys454 provides a ligand contact to (6S)-5-formyl-5,6,7,8-tetrahydrofolate.

It belongs to the TRAFAC class TrmE-Era-EngA-EngB-Septin-like GTPase superfamily. TrmE GTPase family. As to quaternary structure, homodimer. Heterotetramer of two MnmE and two MnmG subunits. It depends on K(+) as a cofactor.

Its subcellular location is the cytoplasm. Exhibits a very high intrinsic GTPase hydrolysis rate. Involved in the addition of a carboxymethylaminomethyl (cmnm) group at the wobble position (U34) of certain tRNAs, forming tRNA-cmnm(5)s(2)U34. The sequence is that of tRNA modification GTPase MnmE from Salmonella gallinarum (strain 287/91 / NCTC 13346).